The sequence spans 100 residues: Integration host factor subunit beta (100 aa).

It belongs to the bacterial histone-like protein family. In terms of assembly, heterodimer of an alpha and a beta chain.

In terms of biological role, this protein is one of the two subunits of integration host factor, a specific DNA-binding protein that functions in genetic recombination as well as in transcriptional and translational control. The polypeptide is Integration host factor subunit beta (Rhodospirillum rubrum (strain ATCC 11170 / ATH 1.1.1 / DSM 467 / LMG 4362 / NCIMB 8255 / S1)).